Reading from the N-terminus, the 636-residue chain is Threonine--tRNA ligase (636 aa).

A TGS domain is found at 1-63; sequence MNEINVTLPD…ADGARVEIIT (63 aa). Residues 243–534 are catalytic; sequence DHRKLGRELD…LIEHFAGNFP (292 aa). Residues Cys335, His386, and His511 each coordinate Zn(2+).

It belongs to the class-II aminoacyl-tRNA synthetase family. In terms of assembly, homodimer. Zn(2+) serves as cofactor.

It localises to the cytoplasm. The enzyme catalyses tRNA(Thr) + L-threonine + ATP = L-threonyl-tRNA(Thr) + AMP + diphosphate + H(+). Its function is as follows. Catalyzes the attachment of threonine to tRNA(Thr) in a two-step reaction: L-threonine is first activated by ATP to form Thr-AMP and then transferred to the acceptor end of tRNA(Thr). Also edits incorrectly charged L-seryl-tRNA(Thr). This is Threonine--tRNA ligase from Citrifermentans bemidjiense (strain ATCC BAA-1014 / DSM 16622 / JCM 12645 / Bem) (Geobacter bemidjiensis).